Reading from the N-terminus, the 131-residue chain is Protein SOB FIVE-LIKE 4 (131 aa).

Disordered stretches follow at residues 1-21 and 40-131; these read MDKE…SSPI and IYNY…YRMK. Residues 8 to 18 are compositionally biased toward polar residues; the sequence is SSESGWTTYLS. Residues 11-16 carry the SOFL-A motif; the sequence is SGWTTY. The span at 46–58 shows a compositional bias: basic and acidic residues; that stretch reads KVEHEEERNKDSD. Positions 60 to 69 match the SOFL-B motif; that stretch reads SMASDASSGP. Positions 79-109 are enriched in basic and acidic residues; the sequence is KALDLKNGKNEGNSKSKNDDDHHNHYHDGKK. The short motif at 107-114 is the Nuclear localization signal element; it reads GKKTSNSY. Over residues 114–131 the composition is skewed to basic residues; that stretch reads YRKKDKKKRENKSTYRMK.

It belongs to the SOFL plant protein family. Expressed, at low levels, in seedlings, roots, flowers and siliques.

It is found in the cytoplasm. The protein localises to the nucleus. Functionally, involved in cytokinin-mediated development. This is Protein SOB FIVE-LIKE 4 from Arabidopsis thaliana (Mouse-ear cress).